A 160-amino-acid polypeptide reads, in one-letter code: UPF0260 protein Rleg2_0895 (160 aa).

This sequence belongs to the UPF0260 family.

The polypeptide is UPF0260 protein Rleg2_0895 (Rhizobium leguminosarum bv. trifolii (strain WSM2304)).